The chain runs to 320 residues: Probable 5-dehydro-4-deoxyglucarate dehydratase (320 aa).

This sequence belongs to the DapA family.

It catalyses the reaction 5-dehydro-4-deoxy-D-glucarate + H(+) = 2,5-dioxopentanoate + CO2 + H2O. It participates in carbohydrate acid metabolism; D-glucarate degradation; 2,5-dioxopentanoate from D-glucarate: step 2/2. In Streptomyces griseus subsp. griseus (strain JCM 4626 / CBS 651.72 / NBRC 13350 / KCC S-0626 / ISP 5235), this protein is Probable 5-dehydro-4-deoxyglucarate dehydratase.